We begin with the raw amino-acid sequence, 527 residues long: Amine oxidase [flavin-containing] A (527 aa).

The residue at position 1 (M1) is an N-acetylmethionine. Over 1-497 the chain is Cytoplasmic; that stretch reads MASREKTSIE…HTFWERNLPS (497 aa). The residue at position 383 (S383) is a Phosphoserine. S-8alpha-FAD cysteine is present on C406. The helical; Anchor for type IV membrane protein transmembrane segment at 498 to 518 threads the bilayer; the sequence is VTGLLKLIGFTTSVTALWIVA. The Mitochondrial intermembrane segment spans residues 519-527; sequence YKFRLLRRS. Positions 520–522 are interaction with membrane phospholipid headgroups; the sequence is KFR.

Belongs to the flavin monoamine oxidase family. In terms of assembly, monomer, homo- or heterodimer (containing two subunits of similar size). Each subunit contains a covalently bound flavin. Enzymatically active as monomer. FAD serves as cofactor.

It localises to the mitochondrion outer membrane. It catalyses the reaction a secondary aliphatic amine + O2 + H2O = a primary amine + an aldehyde + H2O2. It carries out the reaction a primary methyl amine + O2 + H2O = an aldehyde + H2O2 + NH4(+). The enzyme catalyses (R)-adrenaline + O2 + H2O = (R)-3,4-dihydroxymandelaldehyde + methylamine + H2O2. The catalysed reaction is dopamine + O2 + H2O = 3,4-dihydroxyphenylacetaldehyde + H2O2 + NH4(+). It catalyses the reaction tyramine + O2 + H2O = (4-hydroxyphenyl)acetaldehyde + H2O2 + NH4(+). It carries out the reaction (R)-noradrenaline + O2 + H2O = (R)-3,4-dihydroxymandelaldehyde + H2O2 + NH4(+). The enzyme catalyses serotonin + O2 + H2O = (5-hydroxyindol-3-yl)acetaldehyde + H2O2 + NH4(+). The catalysed reaction is kynuramine + O2 + H2O = 3-(2-aminophenyl)-3-oxopropanal + H2O2 + NH4(+). It catalyses the reaction tryptamine + O2 + H2O = indole-3-acetaldehyde + H2O2 + NH4(+). It carries out the reaction 2-phenylethylamine + O2 + H2O = 2-phenylacetaldehyde + H2O2 + NH4(+). In terms of biological role, catalyzes the oxidative deamination of primary and some secondary amine such as neurotransmitters, with concomitant reduction of oxygen to hydrogen peroxide and has important functions in the metabolism of neuroactive and vasoactive amines in the central nervous system and peripheral tissues. Preferentially oxidizes serotonin. Also catalyzes the oxidative deamination of kynuramine to 3-(2-aminophenyl)-3-oxopropanal that can spontaneously condense to 4-hydroxyquinoline. This Canis lupus familiaris (Dog) protein is Amine oxidase [flavin-containing] A.